The following is a 170-amino-acid chain: uncharacterized protein (170 aa).

This is an uncharacterized protein from Acidianus bottle-shaped virus (isolate Italy/Pozzuoli) (ABV).